Reading from the N-terminus, the 451-residue chain is Bifunctional protein GlmU (451 aa).

The segment at M1–R225 is pyrophosphorylase. Residues L7–G10, K21, Q72, G77–T78, Y99–D101, G136, E150, N165, and N223 each bind UDP-N-acetyl-alpha-D-glucosamine. D101 contributes to the Mg(2+) binding site. N223 provides a ligand contact to Mg(2+). Residues L226–A246 form a linker region. Residues G247 to K451 form an N-acetyltransferase region. The UDP-N-acetyl-alpha-D-glucosamine site is built by R329 and K347. H359 serves as the catalytic Proton acceptor. UDP-N-acetyl-alpha-D-glucosamine-binding residues include Y362 and N373. Acetyl-CoA is bound by residues A376, N382–Y383, S401, A419, and R436.

The protein in the N-terminal section; belongs to the N-acetylglucosamine-1-phosphate uridyltransferase family. It in the C-terminal section; belongs to the transferase hexapeptide repeat family. As to quaternary structure, homotrimer. The cofactor is Mg(2+).

Its subcellular location is the cytoplasm. The enzyme catalyses alpha-D-glucosamine 1-phosphate + acetyl-CoA = N-acetyl-alpha-D-glucosamine 1-phosphate + CoA + H(+). It catalyses the reaction N-acetyl-alpha-D-glucosamine 1-phosphate + UTP + H(+) = UDP-N-acetyl-alpha-D-glucosamine + diphosphate. The protein operates within nucleotide-sugar biosynthesis; UDP-N-acetyl-alpha-D-glucosamine biosynthesis; N-acetyl-alpha-D-glucosamine 1-phosphate from alpha-D-glucosamine 6-phosphate (route II): step 2/2. It participates in nucleotide-sugar biosynthesis; UDP-N-acetyl-alpha-D-glucosamine biosynthesis; UDP-N-acetyl-alpha-D-glucosamine from N-acetyl-alpha-D-glucosamine 1-phosphate: step 1/1. It functions in the pathway bacterial outer membrane biogenesis; LPS lipid A biosynthesis. Catalyzes the last two sequential reactions in the de novo biosynthetic pathway for UDP-N-acetylglucosamine (UDP-GlcNAc). The C-terminal domain catalyzes the transfer of acetyl group from acetyl coenzyme A to glucosamine-1-phosphate (GlcN-1-P) to produce N-acetylglucosamine-1-phosphate (GlcNAc-1-P), which is converted into UDP-GlcNAc by the transfer of uridine 5-monophosphate (from uridine 5-triphosphate), a reaction catalyzed by the N-terminal domain. The sequence is that of Bifunctional protein GlmU from Saccharophagus degradans (strain 2-40 / ATCC 43961 / DSM 17024).